The chain runs to 341 residues: 5-formaminoimidazole-4-carboxamide-1-(beta)-D-ribofuranosyl 5'-monophosphate synthetase (341 aa).

Positions 27 and 92 each coordinate 5-amino-1-(5-phospho-beta-D-ribosyl)imidazole-4-carboxamide. The ATP-grasp domain occupies arginine 113–lysine 328. Residues alanine 143 to tyrosine 195 and glutamate 217 contribute to the ATP site. Asparagine 237 serves as a coordination point for 5-amino-1-(5-phospho-beta-D-ribosyl)imidazole-4-carboxamide. Positions 276 and 289 each coordinate Mg(2+).

Belongs to the phosphohexose mutase family. The cofactor is Mg(2+). It depends on Mn(2+) as a cofactor.

The catalysed reaction is 5-amino-1-(5-phospho-beta-D-ribosyl)imidazole-4-carboxamide + formate + ATP = 5-formamido-1-(5-phospho-D-ribosyl)imidazole-4-carboxamide + ADP + phosphate. It functions in the pathway purine metabolism; IMP biosynthesis via de novo pathway; 5-formamido-1-(5-phospho-D-ribosyl)imidazole-4-carboxamide from 5-amino-1-(5-phospho-D-ribosyl)imidazole-4-carboxamide (formate route): step 1/1. Functionally, catalyzes the ATP- and formate-dependent formylation of 5-aminoimidazole-4-carboxamide-1-beta-d-ribofuranosyl 5'-monophosphate (AICAR) to 5-formaminoimidazole-4-carboxamide-1-beta-d-ribofuranosyl 5'-monophosphate (FAICAR) in the absence of folates. The polypeptide is 5-formaminoimidazole-4-carboxamide-1-(beta)-D-ribofuranosyl 5'-monophosphate synthetase (Pyrobaculum aerophilum (strain ATCC 51768 / DSM 7523 / JCM 9630 / CIP 104966 / NBRC 100827 / IM2)).